Reading from the N-terminus, the 920-residue chain is Isoleucine--tRNA ligase (920 aa).

The short motif at P58–H68 is the 'HIGH' region element. L-isoleucyl-5'-AMP is bound at residue E569. Residues K610 to S614 carry the 'KMSKS' region motif. ATP is bound at residue K613. Zn(2+) contacts are provided by C895, C898, C910, and C913.

This sequence belongs to the class-I aminoacyl-tRNA synthetase family. IleS type 1 subfamily. In terms of assembly, monomer. It depends on Zn(2+) as a cofactor.

It is found in the cytoplasm. It carries out the reaction tRNA(Ile) + L-isoleucine + ATP = L-isoleucyl-tRNA(Ile) + AMP + diphosphate. Functionally, catalyzes the attachment of isoleucine to tRNA(Ile). As IleRS can inadvertently accommodate and process structurally similar amino acids such as valine, to avoid such errors it has two additional distinct tRNA(Ile)-dependent editing activities. One activity is designated as 'pretransfer' editing and involves the hydrolysis of activated Val-AMP. The other activity is designated 'posttransfer' editing and involves deacylation of mischarged Val-tRNA(Ile). The protein is Isoleucine--tRNA ligase of Helicobacter pylori (strain J99 / ATCC 700824) (Campylobacter pylori J99).